The sequence spans 325 residues: Brorin (325 aa).

Residues 1–27 (MPSSTAMAVGALSSSLLVTCCLMVALC) form the signal peptide. The tract at residues 37–121 (AQAPEQPGQE…RPRGDTPQAE (85 aa)) is disordered. Composition is skewed to basic and acidic residues over residues 44–56 (GQEK…RDGP) and 64–78 (RPAR…DWKS). Positions 114 to 116 (RGD) match the Mediates cell adhesion motif. 2 consecutive VWFC domains span residues 153–212 (KGCV…PQCK) and 216–274 (NYCE…PICK).

Peripherally associated with AMPAR complex. AMPAR complex consists of an inner core made of 4 pore-forming GluA/GRIA proteins (GRIA1, GRIA2, GRIA3 and GRIA4) and 4 major auxiliary subunits arranged in a twofold symmetry. One of the two pairs of distinct binding sites is occupied either by CNIH2, CNIH3 or CACNG2, CACNG3. The other harbors CACNG2, CACNG3, CACNG4, CACNG8 or GSG1L. This inner core of AMPAR complex is complemented by outer core constituents binding directly to the GluA/GRIA proteins at sites distinct from the interaction sites of the inner core constituents. Outer core constituents include at least PRRT1, PRRT2, CKAMP44/SHISA9, FRRS1L and NRN1. The proteins of the inner and outer core serve as a platform for other, more peripherally associated AMPAR constituents, including VWC2. Alone or in combination, these auxiliary subunits control the gating and pharmacology of the AMPAR complex and profoundly impact their biogenesis and protein processing.

Its subcellular location is the secreted. The protein resides in the extracellular space. It localises to the extracellular matrix. The protein localises to the basement membrane. It is found in the synapse. Functionally, BMP antagonist which may play a role in neural development. Promotes cell adhesion. The polypeptide is Brorin (VWC2) (Homo sapiens (Human)).